The chain runs to 416 residues: Argininosuccinate synthase (416 aa).

Residues 11–19 (AYSGGLDTS) and Ala37 each bind ATP. Tyr88 is a binding site for L-citrulline. Phosphotyrosine is present on residues Tyr88 and Tyr114. 116–124 (AHGATGKGN) is a binding site for ATP. Residues Thr120, Asn124, and Asp125 each contribute to the L-aspartate site. Residue Asn124 participates in L-citrulline binding. Positions 128, 181, 190, 271, and 283 each coordinate L-citrulline. Ser181 carries the phosphoserine modification.

This sequence belongs to the argininosuccinate synthase family. In terms of assembly, homotetramer.

The protein resides in the cytoplasm. The protein localises to the cytosol. It catalyses the reaction L-citrulline + L-aspartate + ATP = 2-(N(omega)-L-arginino)succinate + AMP + diphosphate + H(+). The protein operates within amino-acid biosynthesis; L-arginine biosynthesis; L-arginine from L-ornithine and carbamoyl phosphate: step 2/3. It participates in nitrogen metabolism; urea cycle; (N(omega)-L-arginino)succinate from L-aspartate and L-citrulline: step 1/1. One of the enzymes of the urea cycle, the metabolic pathway transforming neurotoxic amonia produced by protein catabolism into inocuous urea in the liver of ureotelic animals. Catalyzes the formation of arginosuccinate from aspartate, citrulline and ATP and together with ASL it is responsible for the biosynthesis of arginine in most body tissues. This Gallus gallus (Chicken) protein is Argininosuccinate synthase.